We begin with the raw amino-acid sequence, 411 residues long: MNALAATNRNFRHASRILGLDSKLEKSLLIPFREIKVECTIPKDDGSLATYVGFRVQHDNARGPMKGGIRYHPEVDPDEVNALAQLMTWKTAVVDIPYGGAKGGIGCTPKDLSMSELERLTRVFTQKIHDLIGTHTDVPAPDMGTNAQTMAWILDEYSKFHGHSPAVVTGKPIALGGSLGREAATGRGVVFATEALLAQHGKSIKGLTFVIQGFGNVGSWVARLIGERGGKIIAVSDVTGAVKNQNGLDIVDLLRHKEETGCLTNFSGGDHMDPNELLTHECDVLIPCALGGVLNKENAADVKAKFIIEAANHPTDPEADEILSKKGGVILPDIYANAGGVTVSYFEWVQNIQGFMWEEEKVNNELQKYMTKAFHNIKAMCQSHNCSLRMGAFTLAVNRVACATTLRGWEA.

Residue K102 is part of the active site.

This sequence belongs to the Glu/Leu/Phe/Val dehydrogenases family.

The catalysed reaction is L-glutamate + NAD(+) + H2O = 2-oxoglutarate + NH4(+) + NADH + H(+). The enzyme catalyses L-glutamate + NADP(+) + H2O = 2-oxoglutarate + NH4(+) + NADPH + H(+). This is Glutamate dehydrogenase (GDH) from Vitis vinifera (Grape).